The chain runs to 396 residues: Elongation factor Tu (396 aa).

The region spanning 10–205 (KSHANIGTIG…AVDEYIPTPE (196 aa)) is the tr-type G domain. Positions 19–26 (GHVDHGKT) are G1. 19–26 (GHVDHGKT) is a GTP binding site. Thr26 lines the Mg(2+) pocket. Residues 61 to 65 (GITIS) are G2. A G3 region spans residues 82–85 (DCPG). Residues 82 to 86 (DCPGH) and 137 to 140 (NKCD) contribute to the GTP site. Residues 137-140 (NKCD) are G4. A G5 region spans residues 175–177 (SAL). The residue at position 385 (Thr385) is a Phosphothreonine.

Belongs to the TRAFAC class translation factor GTPase superfamily. Classic translation factor GTPase family. EF-Tu/EF-1A subfamily. In terms of assembly, monomer. Interacts with BrxC. In terms of processing, phosphorylated on Thr-385 in vitro by PrkC in the presence of poly-L-lysine or myelin basic protein, dephosphorylated by PrpC.

The protein resides in the cytoplasm. It carries out the reaction GTP + H2O = GDP + phosphate + H(+). Its function is as follows. GTP hydrolase that promotes the GTP-dependent binding of aminoacyl-tRNA to the A-site of ribosomes during protein biosynthesis. The sequence is that of Elongation factor Tu from Bacillus subtilis (strain 168).